The primary structure comprises 101 residues: Isochorismate pyruvate lyase (101 aa).

Residues 4 to 94 (PEDCTGLADI…WYIAEQIKYW (91 aa)) enclose the Chorismate mutase domain. 4 residues coordinate substrate: R14, R31, K42, and Q90.

In terms of assembly, dimer of dimers.

It carries out the reaction isochorismate = salicylate + pyruvate. The catalysed reaction is chorismate = prephenate. The protein operates within siderophore biosynthesis; salicylate biosynthesis. Its activity is regulated as follows. Inhibited by endo-oxabicyclic diacid resembling to the conformation of the transition state. Functionally, involved in the incorporation of salicylate into the siderophore pyochelin. Catalyzes the elimination of the enolpyruvyl side chain from isochorismate to yield salicylate and pyruvate via a rare pericyclic hydrogen transfer mechanism from C2 to C5. PchB also catalyzes the nonphysiological Claisen rearrangement of chorismate to prephenate in which the pyruvylenol tail is transferred from a C3 ether linkage to a C1-C9 linkage. In Pseudomonas aeruginosa (strain ATCC 15692 / DSM 22644 / CIP 104116 / JCM 14847 / LMG 12228 / 1C / PRS 101 / PAO1), this protein is Isochorismate pyruvate lyase.